The sequence spans 365 residues: Peptide chain release factor 2 (365 aa).

Position 252 is an N5-methylglutamine (glutamine 252).

The protein belongs to the prokaryotic/mitochondrial release factor family. Methylated by PrmC. Methylation increases the termination efficiency of RF2.

The protein resides in the cytoplasm. Peptide chain release factor 2 directs the termination of translation in response to the peptide chain termination codons UGA and UAA. This chain is Peptide chain release factor 2 (prfB), found in Haemophilus influenzae (strain ATCC 51907 / DSM 11121 / KW20 / Rd).